Here is a 94-residue protein sequence, read N- to C-terminus: Large ribosomal subunit protein bL28 (94 aa).

The protein belongs to the bacterial ribosomal protein bL28 family.

This is Large ribosomal subunit protein bL28 from Novosphingobium aromaticivorans (strain ATCC 700278 / DSM 12444 / CCUG 56034 / CIP 105152 / NBRC 16084 / F199).